Reading from the N-terminus, the 395-residue chain is Tryptophan--tRNA ligase (395 aa).

ATP contacts are provided by residues 8-10 (RPT) and 16-17 (GH). The 'HIGH' region signature appears at 9–17 (PTGKLHLGH). Residues 117-179 (RLTDLEKEFK…EIEPEILKRL (63 aa)) form an insert region. Asp-204 contacts L-tryptophan. ATP is bound by residues 216 to 218 (GED), Ile-254, and 261 to 265 (KMSKS). The 'KMSKS' region signature appears at 261 to 265 (KMSKS).

Belongs to the class-I aminoacyl-tRNA synthetase family. As to quaternary structure, homodimer.

The protein localises to the cytoplasm. It catalyses the reaction tRNA(Trp) + L-tryptophan + ATP = L-tryptophyl-tRNA(Trp) + AMP + diphosphate + H(+). Catalyzes the attachment of tryptophan to tRNA(Trp). The polypeptide is Tryptophan--tRNA ligase (Aquifex aeolicus (strain VF5)).